Consider the following 285-residue polypeptide: Nucleotide-binding protein PFL_0912 (285 aa).

8–15 (GRSGSGKS) serves as a coordination point for ATP. Residue 60 to 63 (DARN) coordinates GTP.

It belongs to the RapZ-like family.

Its function is as follows. Displays ATPase and GTPase activities. In Pseudomonas fluorescens (strain ATCC BAA-477 / NRRL B-23932 / Pf-5), this protein is Nucleotide-binding protein PFL_0912.